The following is a 121-amino-acid chain: MDKTQSRLRRARQTRIKIAELQVARLAVHRTNTHIYAQVFSPCGTKVLASASTLEAEVRAQLADKSGKGGNVAAATLIGKRIAEKAKAAGIESVAFDRSGFRYHGRVKALAEAAREAGLKF.

This sequence belongs to the universal ribosomal protein uL18 family. In terms of assembly, part of the 50S ribosomal subunit; part of the 5S rRNA/L5/L18/L25 subcomplex. Contacts the 5S and 23S rRNAs.

Functionally, this is one of the proteins that bind and probably mediate the attachment of the 5S RNA into the large ribosomal subunit, where it forms part of the central protuberance. This Burkholderia mallei (strain NCTC 10247) protein is Large ribosomal subunit protein uL18.